A 139-amino-acid chain; its full sequence is Hydrogenase maturation factor HypA (139 aa).

His2 serves as a coordination point for Ni(2+). Zn(2+)-binding residues include Cys73, Cys76, Cys110, and Cys113.

It belongs to the HypA/HybF family.

Functionally, involved in the maturation of [NiFe] hydrogenases. Required for nickel insertion into the metal center of the hydrogenase. This chain is Hydrogenase maturation factor HypA, found in Pyrococcus horikoshii (strain ATCC 700860 / DSM 12428 / JCM 9974 / NBRC 100139 / OT-3).